Reading from the N-terminus, the 431-residue chain is STE20-related kinase adapter protein alpha (431 aa).

Serine 2 and serine 46 each carry phosphoserine. Positions 69–379 constitute a Protein kinase domain; sequence YELLTVIGKG…ASTLLNHSFF (311 aa). The disordered stretch occupies residues 310–347; it reads LTMSPSRSVANSGLSDSLTTSTPRPSNGDSPSHPYHRT. The span at 312 to 339 shows a compositional bias: polar residues; it reads MSPSRSVANSGLSDSLTTSTPRPSNGDS. 2 positions are modified to phosphothreonine; by LKB1: threonine 329 and threonine 401. Phosphothreonine is present on threonine 419.

It belongs to the protein kinase superfamily. STE Ser/Thr protein kinase family. STE20 subfamily. In terms of assembly, component of a trimeric complex composed of STK11/LKB1, STRAD (STRADA or STRADB) and CAB39/MO25 (CAB39/MO25alpha or CAB39L/MO25beta): the complex tethers STK11/LKB1 in the cytoplasm and stimulates its catalytic activity.

It is found in the nucleus. The protein localises to the cytoplasm. Its function is as follows. Pseudokinase which, in complex with CAB39/MO25 (CAB39/MO25alpha or CAB39L/MO25beta), binds to and activates STK11/LKB1. Adopts a closed conformation typical of active protein kinases and binds STK11/LKB1 as a pseudosubstrate, promoting conformational change of STK11/LKB1 in an active conformation. This is STE20-related kinase adapter protein alpha (STRADA) from Pongo abelii (Sumatran orangutan).